We begin with the raw amino-acid sequence, 489 residues long: Cytochrome P450 monooxygenase bfoB (489 aa).

Positions 1 to 18 are cleaved as a signal peptide; that stretch reads MLALYLIAGLLVGLLVYR. Residues Asn113, Asn348, and Asn386 are each glycosylated (N-linked (GlcNAc...) asparagine). Cys429 is a heme binding site.

Belongs to the cytochrome P450 family. The cofactor is heme.

It carries out the reaction 2 fonsecin B + NADPH + O2 + H(+) = bifonsecin B + NADP(+) + 2 H2O. The catalysed reaction is 2 rubrofusarin B + NADPH + O2 + 3 H(+) = nigerone + NADP(+) + 2 H2O. The protein operates within secondary metabolite biosynthesis. Functionally, cytochrome P450 monooxygenase; part of the gene cluster that mediates the biosynthesis of bifonsecin B, a dimeric gamma-naphthopyrone. The first step in the biosynthesis of bifonsecin B is the production of gamma-naphthopyrone precursor YWA1 by the non-reducing polyketide synthase albA, via condensation of one acetyl-CoA starter unit with 6 malonyl-CoA units. YWA1 is then methylated by bfoE at position C-6 to yield foncesin which is further methylated at position C-8 by bfoD to produce fonsecin B. A key enzyme in the biosynthetic pathway is the cytochrome P450 monooxygenase bfoB which catalyzes the oxidative dimerization of fonsecin B to bifonsecin B. Bfob also catalyzes the oxidative dimerization of rubrofusarin B into nigerone. The stereoselectivity of bfoB is influenced by the two natural monomeric substrates; homodimerization of fonsecin B yields a stereochemically pure biaryl, M-foncerine B, while rubrofusarin B yields a mixture of enantiomers M- and P-nigerone. This chain is Cytochrome P450 monooxygenase bfoB, found in Aspergillus brasiliensis (strain CBS 101740 / IMI 381727 / IBT 21946).